The primary structure comprises 232 residues: Small ribosomal subunit protein uS2 (232 aa).

It belongs to the universal ribosomal protein uS2 family.

This Natranaerobius thermophilus (strain ATCC BAA-1301 / DSM 18059 / JW/NM-WN-LF) protein is Small ribosomal subunit protein uS2.